The chain runs to 148 residues: C-C motif chemokine 2 (148 aa).

Positions 1 to 23 are cleaved as a signal peptide; the sequence is MQVPVMLLGLLFTVAGWSIHVLA. Glutamine 24 carries the post-translational modification Pyrrolidone carboxylic acid. Intrachain disulfides connect cysteine 34/cysteine 59 and cysteine 35/cysteine 75. Residue asparagine 126 is glycosylated (N-linked (GlcNAc...) asparagine).

Belongs to the intercrine beta (chemokine CC) family. Monomer or homodimer; in equilibrium. Is tethered on endothelial cells by glycosaminoglycan (GAG) side chains of proteoglycans. Interacts with TNFAIP6 (via Link domain). Post-translationally, processing at the N-terminus can regulate receptor and target cell selectivity. Deletion of the N-terminal residue converts it from an activator of basophil to an eosinophil chemoattractant. In terms of processing, N-Glycosylated.

It localises to the secreted. In terms of biological role, acts as a ligand for C-C chemokine receptor CCR2. Signals through binding and activation of CCR2 and induces a strong chemotactic response and mobilization of intracellular calcium ions. Exhibits a chemotactic activity for monocytes and basophils but not neutrophils or eosinophils. Plays an important role in mediating peripheral nerve injury-induced neuropathic pain. Increases NMDA-mediated synaptic transmission in both dopamine D1 and D2 receptor-containing neurons, which may be caused by MAPK/ERK-dependent phosphorylation of GRIN2B/NMDAR2B. This is C-C motif chemokine 2 (Ccl2) from Mus musculus (Mouse).